The chain runs to 87 residues: Cell division topological specificity factor (87 aa).

The protein belongs to the MinE family.

Its function is as follows. Prevents the cell division inhibition by proteins MinC and MinD at internal division sites while permitting inhibition at polar sites. This ensures cell division at the proper site by restricting the formation of a division septum at the midpoint of the long axis of the cell. This Vibrio vulnificus (strain CMCP6) protein is Cell division topological specificity factor.